The chain runs to 211 residues: MGSIGNGRSDSVVGIQMPPAGSKMVLEPEALQVTTSPVPRWPRLGVVMVATRAVAMVMALLSMSLMVSSKQRGILTIFGIEIPLDANWSFSYSLQFLVAMSTASAAYSLAQLLLIAHKAVKKSPIVPSRRHAWLLFAGDQVFSLAMMSAGSAAAAVANLNRTGIRHTALPNFCKPLPRFCDLSAVSIACAFLSCVFLAASAVIDVIWLSSP.

Residues 1 to 45 are Cytoplasmic-facing; that stretch reads MGSIGNGRSDSVVGIQMPPAGSKMVLEPEALQVTTSPVPRWPRLG. Residues 46-66 traverse the membrane as a helical segment; it reads VVMVATRAVAMVMALLSMSLM. Residues 67–95 are Extracellular-facing; it reads VSSKQRGILTIFGIEIPLDANWSFSYSLQ. A glycan (N-linked (GlcNAc...) asparagine) is linked at N87. The helical transmembrane segment at 96 to 116 threads the bilayer; that stretch reads FLVAMSTASAAYSLAQLLLIA. Residues 117-131 are Cytoplasmic-facing; the sequence is HKAVKKSPIVPSRRH. Residues 132–152 traverse the membrane as a helical segment; it reads AWLLFAGDQVFSLAMMSAGSA. The Extracellular portion of the chain corresponds to 153–186; the sequence is AAAVANLNRTGIRHTALPNFCKPLPRFCDLSAVS. Residue N160 is glycosylated (N-linked (GlcNAc...) asparagine). A helical transmembrane segment spans residues 187-207; it reads IACAFLSCVFLAASAVIDVIW. Over 208–211 the chain is Cytoplasmic; the sequence is LSSP.

Belongs to the Casparian strip membrane proteins (CASP) family. In terms of assembly, homodimer and heterodimers.

It is found in the cell membrane. The sequence is that of CASP-like protein 3A1 from Sorghum bicolor (Sorghum).